Reading from the N-terminus, the 89-residue chain is Small ribosomal subunit protein uS15 (89 aa).

It belongs to the universal ribosomal protein uS15 family. In terms of assembly, part of the 30S ribosomal subunit. Forms a bridge to the 50S subunit in the 70S ribosome, contacting the 23S rRNA.

In terms of biological role, one of the primary rRNA binding proteins, it binds directly to 16S rRNA where it helps nucleate assembly of the platform of the 30S subunit by binding and bridging several RNA helices of the 16S rRNA. Functionally, forms an intersubunit bridge (bridge B4) with the 23S rRNA of the 50S subunit in the ribosome. The protein is Small ribosomal subunit protein uS15 of Mycobacterium avium (strain 104).